Consider the following 240-residue polypeptide: Octanoyltransferase (240 aa).

A BPL/LPL catalytic domain is found at 49–233 (HQAEELVWLL…AFESVFGATR (185 aa)). Substrate contacts are provided by residues 87-94 (RGGQVTYH), 162-164 (AIG), and 175-177 (GIA). The Acyl-thioester intermediate role is filled by C193.

Belongs to the LipB family.

It is found in the cytoplasm. It catalyses the reaction octanoyl-[ACP] + L-lysyl-[protein] = N(6)-octanoyl-L-lysyl-[protein] + holo-[ACP] + H(+). Its pathway is protein modification; protein lipoylation via endogenous pathway; protein N(6)-(lipoyl)lysine from octanoyl-[acyl-carrier-protein]: step 1/2. In terms of biological role, catalyzes the transfer of endogenously produced octanoic acid from octanoyl-acyl-carrier-protein onto the lipoyl domains of lipoate-dependent enzymes. Lipoyl-ACP can also act as a substrate although octanoyl-ACP is likely to be the physiological substrate. The protein is Octanoyltransferase of Bradyrhizobium sp. (strain ORS 278).